The sequence spans 459 residues: Bifunctional protein GlmU (459 aa).

The tract at residues 1-230 (MSNRFAVILA…FDETLGVNDR (230 aa)) is pyrophosphorylase. UDP-N-acetyl-alpha-D-glucosamine is bound by residues 9–12 (LAAG), K23, Q73, and 78–79 (GT). D103 is a Mg(2+) binding site. UDP-N-acetyl-alpha-D-glucosamine is bound by residues G140, E155, N170, and N228. N228 is a binding site for Mg(2+). The tract at residues 231 to 251 (VALSQAEVIMKNRINHKNMVN) is linker. Positions 252–459 (GVTIIDPSNT…VDQLLNKKKS (208 aa)) are N-acetyltransferase. UDP-N-acetyl-alpha-D-glucosamine-binding residues include R333 and K351. The active-site Proton acceptor is H363. 2 residues coordinate UDP-N-acetyl-alpha-D-glucosamine: Y366 and N377. Acetyl-CoA is bound by residues 386–387 (NY), A423, and R440.

The protein in the N-terminal section; belongs to the N-acetylglucosamine-1-phosphate uridyltransferase family. It in the C-terminal section; belongs to the transferase hexapeptide repeat family. As to quaternary structure, homotrimer. Mg(2+) is required as a cofactor.

The protein localises to the cytoplasm. It catalyses the reaction alpha-D-glucosamine 1-phosphate + acetyl-CoA = N-acetyl-alpha-D-glucosamine 1-phosphate + CoA + H(+). The enzyme catalyses N-acetyl-alpha-D-glucosamine 1-phosphate + UTP + H(+) = UDP-N-acetyl-alpha-D-glucosamine + diphosphate. It participates in nucleotide-sugar biosynthesis; UDP-N-acetyl-alpha-D-glucosamine biosynthesis; N-acetyl-alpha-D-glucosamine 1-phosphate from alpha-D-glucosamine 6-phosphate (route II): step 2/2. Its pathway is nucleotide-sugar biosynthesis; UDP-N-acetyl-alpha-D-glucosamine biosynthesis; UDP-N-acetyl-alpha-D-glucosamine from N-acetyl-alpha-D-glucosamine 1-phosphate: step 1/1. The protein operates within bacterial outer membrane biogenesis; LPS lipid A biosynthesis. Functionally, catalyzes the last two sequential reactions in the de novo biosynthetic pathway for UDP-N-acetylglucosamine (UDP-GlcNAc). The C-terminal domain catalyzes the transfer of acetyl group from acetyl coenzyme A to glucosamine-1-phosphate (GlcN-1-P) to produce N-acetylglucosamine-1-phosphate (GlcNAc-1-P), which is converted into UDP-GlcNAc by the transfer of uridine 5-monophosphate (from uridine 5-triphosphate), a reaction catalyzed by the N-terminal domain. The sequence is that of Bifunctional protein GlmU from Bacillus cytotoxicus (strain DSM 22905 / CIP 110041 / 391-98 / NVH 391-98).